The sequence spans 236 residues: tRNA (guanine-N(7)-)-methyltransferase (236 aa).

Positions 68, 93, 120, and 143 each coordinate S-adenosyl-L-methionine. The active site involves aspartate 143. Substrate contacts are provided by residues lysine 147, aspartate 179, and 212-215 (TKFE).

The protein belongs to the class I-like SAM-binding methyltransferase superfamily. TrmB family.

It carries out the reaction guanosine(46) in tRNA + S-adenosyl-L-methionine = N(7)-methylguanosine(46) in tRNA + S-adenosyl-L-homocysteine. It participates in tRNA modification; N(7)-methylguanine-tRNA biosynthesis. In terms of biological role, catalyzes the formation of N(7)-methylguanine at position 46 (m7G46) in tRNA. The chain is tRNA (guanine-N(7)-)-methyltransferase from Nitrosococcus oceani (strain ATCC 19707 / BCRC 17464 / JCM 30415 / NCIMB 11848 / C-107).